Here is a 448-residue protein sequence, read N- to C-terminus: Beclin-1 (448 aa).

Methionine 1 is subject to N-acetylmethionine. 2 positions are modified to phosphoserine: serine 14 and serine 29. Residues serine 88, serine 91, and serine 94 each carry the phosphoserine; by AMPK modification. The BH3 motif lies at 106-125 (TMENLSRRLKVTGDLFDIMS). The segment at 110–157 (LSRRLKVTGDLFDIMSGQTDVDHPLCEECTDTLLDQLDTQLNVTENEC) is interaction with BCL2 and BCL2L1. Threonine 117 carries the post-translational modification Phosphothreonine; by DAPK1. A coiled-coil region spans residues 140-267 (DTLLDQLDTQ…QLDKLKKTNV (128 aa)). Positions 243–448 (DELKSVENQM…AWVSSQFYNK (206 aa)) are evolutionary conserved domain (ECD). Residues lysine 400 and lysine 435 each participate in a glycyl lysine isopeptide (Lys-Gly) (interchain with G-Cter in ubiquitin) cross-link. Residues 423–448 (WTKALKFMLTNLKWGLAWVSSQFYNK) are required for membrane-association.

The protein belongs to the beclin family. A homodimeric form is proposed to exist; this metastable form readily transits to ATG14- or UVRAG-containing complexes with BECN1:UVRAG being more stable than BECN1:ATG14. Component of the PI3K (PI3KC3/PI3K-III/class III phosphatidylinositol 3-kinase) complex the core of which is composed of the catalytic subunit PIK3C3, the regulatory subunit PIK3R4 and BECN1 associating with additional regulatory/auxiliary subunits to form alternative complex forms. Alternative complex forms containing a fourth regulatory subunit in a mutually exclusive manner are PI3K complex I (PI3KC3-C1) containing ATG14, and PI3K complex II (PI3KC3-C2) containing UVRAG. PI3KC3-C1 displays a V-shaped architecture with PIK3R4 serving as a bridge between PIK3C3 and the ATG14:BECN1 subcomplex. Both, PI3KC3-C1 and PI3KC3-C2, can associate with further regulatory subunits, such as RUBCN, SH3GLB1/Bif-1 and AMBRA1. PI3KC3-C1 probably associates with PIK3CB. Forms a complex with PPP2CA and AMBRA1; AMBRA1 and BECN1 components of the complex regulate MYC stability via different pathways. Component of the complex, at least composed of LRPPRC, BECN1 and BCL2; the interactions prevent BECN1 from forming an autophagy-inducing complex with PIK3C3. Interacts with AMBRA1, GOPC, GRID2. Interacts with BCL2 and BCL2L1 isoform Bcl-X(L); the interaction inhibits BECN1 function in promoting autophagy by interfering with the formation of the PI3K complex. Interacts with cytosolic HMGB1; inhibits the interaction of BECN1 and BCL2 leading to promotion of autophagy. Interacts with USP10, USP13, VMP1, DAPK1, RAB39A. Interacts with the poly-Gln domain of ATXN3; the interaction causes deubiquitination at Lys-400 and stabilizes BECN1. Interacts with SLAMF1. Interacts with TRIM5; the interaction causes activation of BECN1 by causing its dissociation from its inhibitors BCL2 and TAB2. Interacts with active ULK1 (phosphorylated on 'Ser-317') and MEFV simultaneously. Interacts with WDR81 and WDR91; negatively regulates the PI3 kinase/PI3K activity associated with endosomal membranes. Interacts with LAPTM4B; competes with EGFR for LAPTM4B binding; regulates EGFR activity. Interacts with TRIM50. Interacts with TRIM16. Interacts with ATG14; this interaction is increased in the absence of TMEM39A. Interacts with WASHC1; preventing interaction with AMBRA1 and the DCX(AMBRA1) complex and subsequent ubiquitination. Interacts with TRIM17. Interacts with BCL2L10/BCL-B (via BH1 domain). Interacts with SH3BGRL. Interacts with IRGM; enhancing BECN1-interacting partners and influencing the composition of the BECN1 complex. Interacts with ARMC3. Interacts with LRPPRC. In terms of assembly, (Microbial infection) Interacts with African swine fever virus (ASFV) apoptosis regulator Bcl-2 homolog; this interaction allows the virus to inhibit BECN1, and thus autophagy. Post-translationally, phosphorylation at Thr-117 by DAPK1 reduces its interaction with BCL2 and BCL2L1 and promotes induction of autophagy. In response to autophagic stimuli, phosphorylated at serine residues by AMPK in an ATG14-dependent manner, and this phosphorylation is critical for maximally efficient autophagy. In terms of processing, polyubiquitinated by NEDD4, both with 'Lys-11'- and 'Lys-63'-linkages. 'Lys-11'-linked polyubiquitination leads to degradation and is enhanced when the stabilizing interaction partner VPS34 is depleted. Deubiquitinated by USP10 and USP13, leading to stabilize the PIK3C3/VPS34-containing complexes. Polyubiquitinated at Lys-400 with 'Lys-48'-linkages. 'Lys-48'-linked polyubiquitination of Lys-400 leads to degradation. Deubiquitinated by ATXN3, leading to stabilization. Ubiquitinated at Lys-435 via 'Lys-63'-linkage by the DCX(AMBRA1) complex, thereby increasing the association between BECN1 and PIK3C3 to promote PIK3C3 activity. 'Lys-48'-linked ubiquitination by RNF216 leads to proteasomal degradation and autophagy inhibition. Proteolytically processed by caspases including CASP8 and CASP3; the C-terminal fragments lack autophagy-inducing capacity and are proposed to induce apoptosis. Thus the cleavage is proposed to be an determinant to switch from autophagy to apoptosis pathways affecting cellular homeostasis including viral infections and survival of tumor cells.

It is found in the cytoplasm. The protein localises to the golgi apparatus. Its subcellular location is the trans-Golgi network membrane. The protein resides in the endosome membrane. It localises to the endoplasmic reticulum membrane. It is found in the mitochondrion membrane. The protein localises to the cytoplasmic vesicle. Its subcellular location is the autophagosome. The protein resides in the mitochondrion. It localises to the nucleus. Functionally, plays a central role in autophagy. Acts as a core subunit of the PI3K complex that mediates formation of phosphatidylinositol 3-phosphate; different complex forms are believed to play a role in multiple membrane trafficking pathways: PI3KC3-C1 is involved in initiation of autophagosomes and PI3KC3-C2 in maturation of autophagosomes and endocytosis. Involved in regulation of degradative endocytic trafficking and required for the abscission step in cytokinesis, probably in the context of PI3KC3-C2. Essential for the formation of PI3KC3-C2 but not PI3KC3-C1 PI3K complex forms. Involved in endocytosis. May play a role in antiviral host defense. Its function is as follows. Beclin-1-C 35 kDa localized to mitochondria can promote apoptosis; it induces the mitochondrial translocation of BAX and the release of proapoptotic factors. The chain is Beclin-1 (BECN1) from Sus scrofa (Pig).